The sequence spans 132 residues: Large ribosomal subunit protein uL14 (132 aa).

It belongs to the universal ribosomal protein uL14 family. As to quaternary structure, part of the 50S ribosomal subunit. Forms a cluster with proteins L3 and L24e, part of which may contact the 16S rRNA in 2 intersubunit bridges.

In terms of biological role, binds to 23S rRNA. Forms part of two intersubunit bridges in the 70S ribosome. The sequence is that of Large ribosomal subunit protein uL14 from Methanosarcina barkeri (strain Fusaro / DSM 804).